A 408-amino-acid chain; its full sequence is LL-diaminopimelate aminotransferase (408 aa).

2 residues coordinate substrate: tyrosine 15 and glycine 42. Pyridoxal 5'-phosphate contacts are provided by residues tyrosine 72, 108–109 (SK), tyrosine 132, asparagine 187, tyrosine 218, and 246–248 (SFS). Positions 109, 132, and 187 each coordinate substrate. Position 249 is an N6-(pyridoxal phosphate)lysine (lysine 249). Pyridoxal 5'-phosphate-binding residues include arginine 257 and asparagine 292. 2 residues coordinate substrate: asparagine 292 and arginine 388.

Belongs to the class-I pyridoxal-phosphate-dependent aminotransferase family. LL-diaminopimelate aminotransferase subfamily. As to quaternary structure, homodimer. The cofactor is pyridoxal 5'-phosphate.

It carries out the reaction (2S,6S)-2,6-diaminopimelate + 2-oxoglutarate = (S)-2,3,4,5-tetrahydrodipicolinate + L-glutamate + H2O + H(+). It functions in the pathway amino-acid biosynthesis; L-lysine biosynthesis via DAP pathway; LL-2,6-diaminopimelate from (S)-tetrahydrodipicolinate (aminotransferase route): step 1/1. Functionally, involved in the synthesis of meso-diaminopimelate (m-DAP or DL-DAP), required for both lysine and peptidoglycan biosynthesis. Catalyzes the direct conversion of tetrahydrodipicolinate to LL-diaminopimelate. The sequence is that of LL-diaminopimelate aminotransferase from Synechococcus sp. (strain CC9311).